We begin with the raw amino-acid sequence, 117 residues long: Crustacean hyperglycemic hormones 3 (117 aa).

A signal peptide spans 1–24 (MVTPRMLSALSAVLLLVLTASSSA). 3 disulfides stabilise this stretch: C50–C86, C66–C82, and C69–C95. Position 115 is a valine amide (V115).

This sequence belongs to the arthropod CHH/MIH/GIH/VIH hormone family. In terms of tissue distribution, produced by the medulla terminalis X-organ in the eyestalks and transported to the sinus gland where they are stored and released.

The protein localises to the secreted. In terms of biological role, hormone found in the sinus gland of isopods and decapods which controls the blood sugar level. Has a secretagogue action over the amylase released from the midgut gland. May act as a stress hormone and may be involved in the control of molting and reproduction. The protein is Crustacean hyperglycemic hormones 3 of Penaeus japonicus (Kuruma prawn).